The chain runs to 494 residues: Solute carrier family 2, facilitated glucose transporter member 3 (494 aa).

Residues 1–10 are Cytoplasmic-facing; sequence MGTTKVTPYL. A helical membrane pass occupies residues 11-32; the sequence is IFATSVAAIGSFQFGYNTGVIN. Over 33-64 the chain is Extracellular; that stretch reads APEMIIRDFLNYTLDEKLDEPPSRLLLTNLWS. An N-linked (GlcNAc...) asparagine glycan is attached at Asn43. The helical transmembrane segment at 65–84 threads the bilayer; the sequence is LSVAIFSVGGMIGSFSVGLF. Residues 85-89 are Cytoplasmic-facing; that stretch reads NRFGR. A helical membrane pass occupies residues 90 to 110; sequence RNSMLIVNLLAVIGGCLMGFC. The Extracellular segment spans residues 111–117; it reads KISESVE. The chain crosses the membrane as a helical span at residues 118 to 141; the sequence is MLILGRLVIGVFCGLCTGFVPMYI. Topologically, residues 142-152 are cytoplasmic; that stretch reads GEISPTALRGA. Residues 153 to 173 form a helical membrane-spanning segment; that stretch reads FGTLNQLGIVIGILVAQIFGL. Gln158 contributes to the D-glucose binding site. At 174–182 the chain is on the extracellular side; sequence EIILGSEVL. Residues 183–203 form a helical membrane-spanning segment; it reads WPVLLGFTIIPAILQSAALPF. Residues 204 to 268 lie on the Cytoplasmic side of the membrane; that stretch reads CPESPRFLLI…LFRAPSYRQP (65 aa). At Thr231 the chain carries Phosphothreonine. Residues 269 to 289 traverse the membrane as a helical segment; it reads IIISIVLQLSQQLSGINAVFY. The interval 276–278 is important for selectivity against fructose; sequence QLS. D-glucose-binding positions include 279 to 280 and Asn285; that span reads QQ. Residues 290–303 lie on the Extracellular side of the membrane; that stretch reads YSTGIFKDAGVKEP. Residues 304-324 form a helical membrane-spanning segment; that stretch reads IYATIGAGVVNTIFTIVSVFL. Asn314 serves as a coordination point for D-glucose. Residues 325–330 are Cytoplasmic-facing; it reads VERAGR. Residues 331–351 form a helical membrane-spanning segment; the sequence is RTLHLIGLGGMALCSVLMTVS. Topologically, residues 352–362 are extracellular; it reads LLLKDKYDTMS. A helical membrane pass occupies residues 363 to 388; it reads LVCIAAILIYVAFFEIGPGPIPWFIV. D-glucose contacts are provided by Glu377 and Trp385. Over 389 to 398 the chain is Cytoplasmic; that stretch reads AELFSQGPRP. A helical membrane pass occupies residues 399 to 419; that stretch reads AAMAVAGCSNWTSNFLVGLLF. Over 420–428 the chain is Extracellular; the sequence is PSAAYYLGA. The helical transmembrane segment at 429-449 threads the bilayer; sequence YVFVIFAVFLVAFFIFTFFKV. Residues 450 to 494 lie on the Cytoplasmic side of the membrane; it reads PETRGRTFEDITRAFEGQAAEANKLGKGPTMEMNSIQPIETTTHV. Ser484 carries the post-translational modification Phosphoserine. The residue at position 491 (Thr491) is a Phosphothreonine.

This sequence belongs to the major facilitator superfamily. Sugar transporter (TC 2.A.1.1) family. Glucose transporter subfamily. Interacts with SMIM43; the interaction may promote SLC2A3-mediated glucose transport to meet the energy needs of mesendoderm differentiation. Detected in stomach, placenta, lung and brain.

It localises to the cell membrane. It is found in the perikaryon. The protein resides in the cell projection. The enzyme catalyses D-glucose(out) = D-glucose(in). The catalysed reaction is D-galactose(in) = D-galactose(out). Its activity is regulated as follows. Deoxyglucose transport is inhibited by D-glucose, D-galactose and maltose. Galactose transport is inhibited by D-glucose and maltose. Functionally, facilitative glucose transporter. Can also mediate the uptake of various other monosaccharides across the cell membrane. Mediates the uptake of glucose, 2-deoxyglucose, galactose, mannose, xylose and fucose, and probably also dehydroascorbate. Does not mediate fructose transport. Required for mesendoderm differentiation. The polypeptide is Solute carrier family 2, facilitated glucose transporter member 3 (Oryctolagus cuniculus (Rabbit)).